The primary structure comprises 77 residues: Thioredoxin (77 aa).

Residues Cys11 and Cys14 each act as nucleophile in the active site. A disulfide bridge connects residues Cys11 and Cys14.

Belongs to the glutaredoxin family.

Does not function as a glutathione-disulfide oxidoreductase in the presence of glutathione and glutathione reductase. Has low thioredoxin activity in vitro. In Methanothermobacter thermautotrophicus (strain ATCC 29096 / DSM 1053 / JCM 10044 / NBRC 100330 / Delta H) (Methanobacterium thermoautotrophicum), this protein is Thioredoxin.